Here is a 354-residue protein sequence, read N- to C-terminus: MNTRRELPESPYLAAVAGRKPLRVPVWMMRQAGRSLPEYRALRAKNTMMQACFDADLITEITLQPVRRHGVDAAILFSDIVVPLRAAGIDLDIVPDVGPVIAQPVRTADDVAAIRPLEPSRVDPVATAIGRLVGELGDVPLIGFAGAPFTLASYLVEGGPSRNHERTKAMMLGETATWHALMTALTDITIAFLRAQVDAGVDAIQVFDSWAGTLSLADYRTYVLPHSARVFASLAGAGVPMTHFGVGTAELLGAMSEAVTGHGVPAMVGVDWRTSLTDAAARVRPGTALQGNLDPVVLLAGWPVVERAVRAVVEDGRRAVDAGAVGHVFNLGHGVLPATDPAVITDTVALVHEL.

Residues 30-34 (RQAGR), Asp-79, Tyr-154, Ser-209, and His-333 each bind substrate.

Belongs to the uroporphyrinogen decarboxylase family. As to quaternary structure, homodimer.

It localises to the cytoplasm. It catalyses the reaction uroporphyrinogen III + 4 H(+) = coproporphyrinogen III + 4 CO2. It participates in porphyrin-containing compound metabolism; protoporphyrin-IX biosynthesis; coproporphyrinogen-III from 5-aminolevulinate: step 4/4. Catalyzes the decarboxylation of four acetate groups of uroporphyrinogen-III to yield coproporphyrinogen-III. The chain is Uroporphyrinogen decarboxylase from Mycolicibacterium vanbaalenii (strain DSM 7251 / JCM 13017 / BCRC 16820 / KCTC 9966 / NRRL B-24157 / PYR-1) (Mycobacterium vanbaalenii).